Here is a 407-residue protein sequence, read N- to C-terminus: 8-amino-7-oxononanoate synthase (407 aa).

Residue arginine 24 participates in substrate binding. 111–112 (GF) contacts pyridoxal 5'-phosphate. Histidine 137 is a substrate binding site. The pyridoxal 5'-phosphate site is built by serine 183, histidine 211, and threonine 239. N6-(pyridoxal phosphate)lysine is present on lysine 242. Threonine 356 contributes to the substrate binding site.

It belongs to the class-II pyridoxal-phosphate-dependent aminotransferase family. BioF subfamily. As to quaternary structure, homodimer. The cofactor is pyridoxal 5'-phosphate.

The catalysed reaction is 6-carboxyhexanoyl-[ACP] + L-alanine + H(+) = (8S)-8-amino-7-oxononanoate + holo-[ACP] + CO2. It functions in the pathway cofactor biosynthesis; biotin biosynthesis. Catalyzes the decarboxylative condensation of pimeloyl-[acyl-carrier protein] and L-alanine to produce 8-amino-7-oxononanoate (AON), [acyl-carrier protein], and carbon dioxide. The polypeptide is 8-amino-7-oxononanoate synthase (Stenotrophomonas maltophilia (strain R551-3)).